A 379-amino-acid chain; its full sequence is Cytochrome b (379 aa).

Helical transmembrane passes span 33-53 (FGSLLGLCLISQIITGLFLAM), 77-98 (WLIRNLHANGASFFFICLYLHI), 113-133 (WNIGVVLFLLVMMTAFVGYVL), and 178-198 (FFAFHFLFPFVVAGATMIHLL). Heme b contacts are provided by His83 and His97. Heme b-binding residues include His182 and His196. Residue His201 participates in a ubiquinone binding. A run of 4 helical transmembrane segments spans residues 226-246 (YKDLLGFIIMLTALTMLALFY), 288-308 (LGGVLALLSSILVLMVVPILH), 320-340 (ASQLLFWILVADMLVLTWIGG), and 347-367 (YIIIGQVASVLYFSLFLVLNP).

Belongs to the cytochrome b family. In terms of assembly, the cytochrome bc1 complex contains 3 respiratory subunits (MT-CYB, CYC1 and UQCRFS1), 2 core proteins (UQCRC1 and UQCRC2) and probably 6 low-molecular weight proteins. Requires heme b as cofactor.

The protein localises to the mitochondrion inner membrane. Functionally, component of the ubiquinol-cytochrome c reductase complex (complex III or cytochrome b-c1 complex) that is part of the mitochondrial respiratory chain. The b-c1 complex mediates electron transfer from ubiquinol to cytochrome c. Contributes to the generation of a proton gradient across the mitochondrial membrane that is then used for ATP synthesis. This is Cytochrome b (mt-cyb) from Anguilla interioris (Highlands long-finned eel).